The chain runs to 527 residues: Mitochondrial substrate carrier family protein V (527 aa).

Over residues 1-14 (MNSSDFKKSFKEST) the composition is skewed to basic and acidic residues. A disordered region spans residues 1–29 (MNSSDFKKSFKESTENNSNTYRPSKTLNT). Residues 1–132 (MNSSDFKKSF…VSKKSISKEN (132 aa)) lie on the Mitochondrial intermembrane side of the membrane. The segment covering 15-29 (ENNSNTYRPSKTLNT) has biased composition (polar residues). Solcar repeat units follow at residues 130–220 (KENV…CKKH), 253–345 (MTVP…FKII), and 430–519 (VNMI…CKDL). The chain crosses the membrane as a helical span at residues 133–153 (VNYLVSGSIAGAISRSATAGF). The Mitochondrial matrix segment spans residues 154 to 187 (ERLTIIQQVQGMSQNLSQGYVGCIAAMKEMVKRE). The helical transmembrane segment at 188 to 208 (GFKSIWKGNGANIVKVSPNSG) threads the bilayer. Residues 209–258 (IRFLTYEFCKKHFLDNSSNHPSSSSIENGIDGNGVGCGSGSEMKMTVPQT) are Mitochondrial intermembrane-facing. Residues 259–279 (MFSGAMAGLTSTFFTYPLDVV) traverse the membrane as a helical segment. The Mitochondrial matrix segment spans residues 280 to 324 (RIRLSLQGSCSNDYAAHRYNGITHSFFKIHKDEGVKGLYKGLGTS). A helical transmembrane segment spans residues 325 to 345 (IASIVPWVSISFATYEGFKII). Residues 346-435 (CKKMILNYQI…LKKGVNMICD (90 aa)) are Mitochondrial intermembrane-facing. Residues 436–456 (FVCGALSGAVTMTVCYPLDVL) traverse the membrane as a helical segment. Residues 457–487 (RRRMMIQGIGGNKVLYKNGWDATKKILSNEG) lie on the Mitochondrial matrix side of the membrane. A helical membrane pass occupies residues 488 to 508 (LVAFYHGIIPAYFKVVPTVAI). Topologically, residues 509–527 (SFAVYEICKDLGSNKYQQK) are mitochondrial intermembrane.

Belongs to the mitochondrial carrier (TC 2.A.29) family.

It localises to the mitochondrion inner membrane. Its function is as follows. Mitochondrial solute carriers shuttle metabolites, nucleotides, and cofactors through the mitochondrial inner membrane. This is Mitochondrial substrate carrier family protein V (mcfV) from Dictyostelium discoideum (Social amoeba).